The primary structure comprises 328 residues: MSIFARVAGTGSYLPELRLTNQDLVERLAKTGLETSDEWIKTRSGISARHFAAENELTSDLAVRAAEAALSSTGINSADLDLIILATSTPDHLGGFPSTACVVQDKLGAHTSCAAFDVQAVCAGFTYALAVADAFIRSGSYKKVLVIGAETFSRILNFQDRGTCVLFGDGAGAVVLEASKEAGILSTVMHADGSQRDILCVPGRAGNGEVRGSPFMTMDGQAVFKLAVKVLEQVAHEALDKAKLKPEQIDWLVPHQANIRIMEGTAKKMGMSMDKVIVTVHEHGNTSAASIPLALDSGVRSGQIKRGQHLLLEGVGGGFAWGAVAIKY.

Active-site residues include Cys-122 and His-255. The ACP-binding stretch occupies residues 256–260; that stretch reads QANIR. Asn-285 is a catalytic residue.

This sequence belongs to the thiolase-like superfamily. FabH family. As to quaternary structure, homodimer.

The protein localises to the cytoplasm. The catalysed reaction is malonyl-[ACP] + acetyl-CoA + H(+) = 3-oxobutanoyl-[ACP] + CO2 + CoA. The protein operates within lipid metabolism; fatty acid biosynthesis. Catalyzes the condensation reaction of fatty acid synthesis by the addition to an acyl acceptor of two carbons from malonyl-ACP. Catalyzes the first condensation reaction which initiates fatty acid synthesis and may therefore play a role in governing the total rate of fatty acid production. Possesses both acetoacetyl-ACP synthase and acetyl transacylase activities. Its substrate specificity determines the biosynthesis of branched-chain and/or straight-chain of fatty acids. The protein is Beta-ketoacyl-[acyl-carrier-protein] synthase III of Polynucleobacter necessarius subsp. necessarius (strain STIR1).